We begin with the raw amino-acid sequence, 313 residues long: Probable myosin light chain kinase DDB_G0292624 (313 aa).

Residues 6 to 264 (YELHKEIGKG…AKQALEHPWI (259 aa)) enclose the Protein kinase domain. ATP is bound by residues 12-20 (IGKGAFSVV) and lysine 35. Catalysis depends on aspartate 125, which acts as the Proton acceptor.

This sequence belongs to the protein kinase superfamily. CAMK Ser/Thr protein kinase family. CaMK subfamily.

It catalyses the reaction L-seryl-[myosin light chain] + ATP = O-phospho-L-seryl-[myosin light chain] + ADP + H(+). The enzyme catalyses L-threonyl-[myosin light chain] + ATP = O-phospho-L-threonyl-[myosin light chain] + ADP + H(+). Does not have a calmodulin-binding domain. May phosphorylate a specific serine in the N-terminus of a myosin light chain. In Dictyostelium discoideum (Social amoeba), this protein is Probable myosin light chain kinase DDB_G0292624.